Consider the following 285-residue polypeptide: Probable endonuclease 4 (285 aa).

Zn(2+) is bound by residues H69, H109, E145, D179, H182, H216, D229, H231, and E261.

Belongs to the AP endonuclease 2 family. The cofactor is Zn(2+).

It carries out the reaction Endonucleolytic cleavage to 5'-phosphooligonucleotide end-products.. Functionally, endonuclease IV plays a role in DNA repair. It cleaves phosphodiester bonds at apurinic or apyrimidinic (AP) sites, generating a 3'-hydroxyl group and a 5'-terminal sugar phosphate. The polypeptide is Probable endonuclease 4 (Salmonella heidelberg (strain SL476)).